A 499-amino-acid polypeptide reads, in one-letter code: Pyruvate kinase 2 (499 aa).

Residue Arg50 participates in substrate binding. The K(+) site is built by Asn52, Ser54, Asp84, and Thr85. 52–55 (NFSH) is an ATP binding site. Arg91 is a binding site for ATP. Mg(2+) is bound at residue Glu241. Gly264, Asp265, and Thr297 together coordinate substrate. Asp265 contacts Mg(2+).

This sequence belongs to the pyruvate kinase family. In terms of assembly, homotetramer. It depends on Mg(2+) as a cofactor. K(+) is required as a cofactor.

The enzyme catalyses pyruvate + ATP = phosphoenolpyruvate + ADP + H(+). Its pathway is carbohydrate degradation; glycolysis; pyruvate from D-glyceraldehyde 3-phosphate: step 5/5. Its activity is regulated as follows. Activated by fructose 2,6-bisphosphate, activated by the effector in a cooperative manner. In Trypanosoma brucei brucei, this protein is Pyruvate kinase 2 (PYK2).